Here is a 154-residue protein sequence, read N- to C-terminus: Large ribosomal subunit protein uL22 (154 aa).

This sequence belongs to the universal ribosomal protein uL22 family. Part of the 50S ribosomal subunit.

Functionally, this protein binds specifically to 23S rRNA. It makes multiple contacts with different domains of the 23S rRNA in the assembled 50S subunit and ribosome. In terms of biological role, the globular domain of the protein is located near the polypeptide exit tunnel on the outside of the subunit, while an extended beta-hairpin is found that lines the wall of the exit tunnel in the center of the 70S ribosome. This is Large ribosomal subunit protein uL22 from Methanosphaera stadtmanae (strain ATCC 43021 / DSM 3091 / JCM 11832 / MCB-3).